Reading from the N-terminus, the 160-residue chain is MPRIRIAWGSGVAPTEMAAYDAALADANVHNYNLIRVSSVIPADATVSPVDTAPDLGPAGNTLTVVEARGQTAGPGQASAGLAWAPRDGAPGLFYEAADETTPDDVADRVTTGITAGMDVRDWDGVEPSVRTETVTADAGEHAAAVVIAAYGDSDPVFDQ.

S39 bears the Pyruvic acid (Ser) mark.

This sequence belongs to the PdaD family. Requires pyruvate as cofactor.

It carries out the reaction L-arginine + H(+) = agmatine + CO2. The chain is Pyruvoyl-dependent arginine decarboxylase (pdaD) from Halobacterium salinarum (strain ATCC 29341 / DSM 671 / R1).